We begin with the raw amino-acid sequence, 545 residues long: MSQSKRILRAIYLSLFFIGIFMIIDDIFFSHKSPSVMDKEIGFNLDKDFDIDNSSIDEDYALNLSANSKDIDVETGIYYATFSTFRGDLISLKLKDHLNLEKEPTEMVKVNMDRESLFYVTLDNLTRDLFSYDRVDDYTHDFKTNFEYNGKFYEYIKRYTFSNKGEYLIKLEIFLNNIDANDNSDIDSYKFVLSSDIEKLSERGKLQYNNYLSQAVYFDTKLRYGKDGLSVISPKWVGSGTKYFEVLVSKENMNVEFKQESKILKAFILNKVGNKNISDTFYIYAGPKDNGYLDLFNKEDLNSFGLSNVEFGMSVEKSLLYFIQVPMQLIMQIFYNVIPNWGLSIMFLTIVVRILIFPLTFKSFRATAELSKLQPKMKEIQVKFKNDPKRLNEEMGKLYREEGVNPLGGCFPILLQLPVFFALYGLVNNFFLLRGASFIPGWIDDLSIGDSIYYFGYKVFMWTDIRILPFIMMVTQLISTIISSNVSFKSLGSQQKILYFGMPIMFFFILYDMPSGLLIYWITTNIFTILQQYYIKMNVSERRNR.

6 consecutive transmembrane segments (helical) span residues 10-30 (AIYL…IFFS), 319-339 (LLYF…NVIP), 341-361 (WGLS…PLTF), 407-427 (LGGC…YGLV), 467-487 (ILPF…SNVS), and 502-522 (MPIM…IYWI).

The protein belongs to the OXA1/ALB3/YidC family. Type 1 subfamily. In terms of assembly, interacts with the Sec translocase complex via SecD. Specifically interacts with transmembrane segments of nascent integral membrane proteins during membrane integration.

It localises to the cell inner membrane. Functionally, required for the insertion and/or proper folding and/or complex formation of integral membrane proteins into the membrane. Involved in integration of membrane proteins that insert both dependently and independently of the Sec translocase complex, as well as at least some lipoproteins. Aids folding of multispanning membrane proteins. The protein is Membrane protein insertase YidC of Borrelia hermsii (strain HS1 / DAH).